We begin with the raw amino-acid sequence, 331 residues long: Nucleotide sugar transporter SLC35B4 (331 aa).

The next 11 helical transmembrane spans lie at 4 to 24, 30 to 50, 59 to 79, 92 to 112, 117 to 137, 153 to 173, 201 to 221, 229 to 249, 251 to 267, 268 to 288, and 291 to 311; these read ALAVGLVFAGCCSNVIFLELL, GCGNIVTFAQFLFIAVEGFLF, PAIPIRYYAIMVTMFFTVSVV, LHMIFRSGSLIANMILGIIIL, SIFKYTSIALVSVGIFICTFM, GFQAFVWWLLGIGALTFALLM, ALPLPGFVFLASDIYDHAVLF, IPVIGVTLPIMWFYLLMNIIT, YVCIRGVFILTTECASL, TVTLVVTLRKFVSLIFSILYF, and PFTLWHWLGTLFVFIGTLMYT. The short motif at 326 to 331 is the Mediates endoplasmic reticulum retention element; the sequence is KDSKKN.

Belongs to the nucleotide-sugar transporter family. SLC35B subfamily.

Its subcellular location is the endoplasmic reticulum membrane. The enzyme catalyses UDP-N-acetyl-alpha-D-glucosamine(in) + UDP-alpha-D-glucuronate(out) = UDP-N-acetyl-alpha-D-glucosamine(out) + UDP-alpha-D-glucuronate(in). It carries out the reaction UDP-alpha-D-xylose(in) + UDP-alpha-D-glucuronate(out) = UDP-alpha-D-xylose(out) + UDP-alpha-D-glucuronate(in). In terms of biological role, antiporter that transports nucleotide sugars across the endoplasmic reticulum (ER) membrane in exchange for another nucleotide sugar. May couple UDP-alpha-D-glucuronate (UDP-GlcA) or UDP-alpha-D-xylose (UDP-Xyl) efflux to UDP-alpha-D-glucuronate (UDP-GlcA) influx into the ER lumen, which in turn stimulates glucuronidation and excretion of endobiotics and xenobiotics. Functionally, has UDP-GlcA:UDP-GlcNAc antiporter activity. The protein is Nucleotide sugar transporter SLC35B4 (SLC35B4) of Homo sapiens (Human).